The chain runs to 76 residues: Small ribosomal subunit protein bS16 (76 aa).

Belongs to the bacterial ribosomal protein bS16 family.

This Helicobacter pylori (strain HPAG1) protein is Small ribosomal subunit protein bS16.